The sequence spans 289 residues: ATP synthase gamma chain (289 aa).

This sequence belongs to the ATPase gamma chain family. As to quaternary structure, F-type ATPases have 2 components, CF(1) - the catalytic core - and CF(0) - the membrane proton channel. CF(1) has five subunits: alpha(3), beta(3), gamma(1), delta(1), epsilon(1). CF(0) has three main subunits: a, b and c.

It is found in the cell membrane. Its function is as follows. Produces ATP from ADP in the presence of a proton gradient across the membrane. The gamma chain is believed to be important in regulating ATPase activity and the flow of protons through the CF(0) complex. The sequence is that of ATP synthase gamma chain from Lawsonia intracellularis (strain PHE/MN1-00).